A 241-amino-acid chain; its full sequence is MORN repeat-containing protein 3 (241 aa).

An interaction with MDM2 region spans residues 6 to 35 (CPRKVEPPWKGWDRKAQKNGLRHQVFAVNG). MORN repeat units lie at residues 38–60 (YVGEWKGNLKHGKGTQVWKKSGA), 62–84 (YEGDWKFGKRDGYGSLSHPDPET), 91–113 (YSGWWKGDKKSGYGIQFFGPKEY), 114–136 (YEGEWCNNQRSGWGRMYYNNGDI), 137–159 (YEGQWQNDKPEGEGMLRLKNGNR), 160–182 (YEGIWERGMKNGHGRFFHLDHGQ), and 184–205 (FEGYWVDNVAKCGTMIDFGRDE). The interaction with SIRT1 stretch occupies residues 76–100 (SLSHPDPETGKLRRVYSGWWKGDKK). The segment at 206 to 240 (APEPTQFPIPKVEILDPDGVLKEALDKLMKPEEEE) is interaction with TP53.

Interacts with MEIG1. Interacts with TP53, MDM2 and SIRT1; the interactions mediate post-transcriptional modifications of TP53 by MDM2 and SIRT1. Expressed in testis (at protein level).

It is found in the cytoplasmic vesicle. It localises to the secretory vesicle. The protein resides in the acrosome. Its function is as follows. Assembles a suppression complex (suppresome) by tethering SIRT1 and MDM2 to regulate composite modifications of p53/TP53. Confers both deacetylation-mediated functional inactivation, by SIRT1, and ubiquitination-dependent degradation, by MDM2, of p53/TP53, promoting a proliferative and cell survival behaviors. May play a role in the regulation of spermatogenesis. The polypeptide is MORN repeat-containing protein 3 (Morn3) (Mus musculus (Mouse)).